A 219-amino-acid polypeptide reads, in one-letter code: tRNA (guanine-N(7)-)-methyltransferase (219 aa).

The S-adenosyl-L-methionine site is built by D47, E72, N99, and D125. Residue D125 is part of the active site. Residues K129 and D161 each coordinate substrate.

The protein belongs to the class I-like SAM-binding methyltransferase superfamily. TrmB family.

The catalysed reaction is guanosine(46) in tRNA + S-adenosyl-L-methionine = N(7)-methylguanosine(46) in tRNA + S-adenosyl-L-homocysteine. The protein operates within tRNA modification; N(7)-methylguanine-tRNA biosynthesis. Catalyzes the formation of N(7)-methylguanine at position 46 (m7G46) in tRNA. The chain is tRNA (guanine-N(7)-)-methyltransferase from Nostoc sp. (strain PCC 7120 / SAG 25.82 / UTEX 2576).